A 90-amino-acid polypeptide reads, in one-letter code: Transcriptional repressor SdpR (90 aa).

Residues 1-87 (MNNVFKAISD…WMLNFINKGD (87 aa)) form the HTH arsR-type domain. The segment at residues 39 to 62 (PSISHHLNILKQAEVISDHRKGQF) is a DNA-binding region (H-T-H motif).

It is found in the cytoplasm. Functionally, represses the transcription of the sdpIR operon and of several other operons that probably contribute to delaying commitment to sporulation. In Bacillus subtilis (strain 168), this protein is Transcriptional repressor SdpR (sdpR).